We begin with the raw amino-acid sequence, 340 residues long: Protein RecA (340 aa).

ATP is bound at residue 65-72 (GPESGGKT).

Belongs to the RecA family.

It is found in the cytoplasm. Functionally, can catalyze the hydrolysis of ATP in the presence of single-stranded DNA, the ATP-dependent uptake of single-stranded DNA by duplex DNA, and the ATP-dependent hybridization of homologous single-stranded DNAs. It interacts with LexA causing its activation and leading to its autocatalytic cleavage. This chain is Protein RecA, found in Thermus thermophilus (strain ATCC BAA-163 / DSM 7039 / HB27).